Here is a 254-residue protein sequence, read N- to C-terminus: 3-deoxy-manno-octulosonate cytidylyltransferase (254 aa).

The protein belongs to the KdsB family.

It is found in the cytoplasm. It carries out the reaction 3-deoxy-alpha-D-manno-oct-2-ulosonate + CTP = CMP-3-deoxy-beta-D-manno-octulosonate + diphosphate. It functions in the pathway nucleotide-sugar biosynthesis; CMP-3-deoxy-D-manno-octulosonate biosynthesis; CMP-3-deoxy-D-manno-octulosonate from 3-deoxy-D-manno-octulosonate and CTP: step 1/1. Its pathway is bacterial outer membrane biogenesis; lipopolysaccharide biosynthesis. Its function is as follows. Activates KDO (a required 8-carbon sugar) for incorporation into bacterial lipopolysaccharide in Gram-negative bacteria. The polypeptide is 3-deoxy-manno-octulosonate cytidylyltransferase (Pseudomonas paraeruginosa (strain DSM 24068 / PA7) (Pseudomonas aeruginosa (strain PA7))).